Here is a 604-residue protein sequence, read N- to C-terminus: MWLQQRIKVFPGLLSSSWARRVLAVSGFLVIIYWYIFSGSHYRSFWYSGKQWGVSGACLQAQIVQWKTLAEKGDVVMVSFPGEEIKLQGPAMVGNGQIIVDVGKNNLWVSSLSVLFHLTNYSPLTLFKNVGALAETHATAIFLKEGLIRTIRCLQVEASDSPRDCVTVREDHFAHRSRPHVYVQNIHITNPSDRVVTFDISSQKPLTGETFSTSLEKVQEKQFLLSSGRVSVEDGKIILVVVATKKLASRLQVSPKSEHDETVLSVVYASEPIDPAKLSDTFSKLRENAKKEMFELMHMKTEDLFHEHQQIWSDLIVSGIEMKKITDLHTPSRDTINITLYYMLSCSLAPLVDPALSNEEREKMESFLNYADHCFTGHSSMHAENLWPGSLSGITQLLQLWDLWKLTLQKRGCKSLVSAGAHGLMQGMLLSFGGLQFTENHLQFQSDPHVLHNSYSLRGIHYNKDLINLAVLLDQDEKPFLHVSVKFQDKLVKLYACEAGCLNEPVELTSEVRGHIFPVLITQPLTPLLYISTDLTHLQDLRHTLHLKEILAHEEHMAKQYRGLPFLFWFSVASLITLFHLFLFKLIYNEYCGPGAKPLFRSKV.

An N-terminal signal peptide occupies residues 1-40; that stretch reads MWLQQRIKVFPGLLSSSWARRVLAVSGFLVIIYWYIFSGS. Residues 41–563 lie on the Extracellular side of the membrane; sequence HYRSFWYSGK…EEHMAKQYRG (523 aa). N-linked (GlcNAc...) asparagine glycosylation is present at Asn337. The helical transmembrane segment at 564–584 threads the bilayer; sequence LPFLFWFSVASLITLFHLFLF. Residues 585-604 lie on the Cytoplasmic side of the membrane; that stretch reads KLIYNEYCGPGAKPLFRSKV.

It is found in the membrane. This is an uncharacterized protein from Xenopus laevis (African clawed frog).